Here is a 300-residue protein sequence, read N- to C-terminus: Haloalkane dehalogenase (300 aa).

Residues 32–155 form the AB hydrolase-1 domain; sequence AIVFQHGNPT…PAVRGVFQGF (124 aa). The active-site Nucleophile is Asp109. Glu133 serves as the catalytic Proton donor. His273 functions as the Proton acceptor in the catalytic mechanism.

This sequence belongs to the haloalkane dehalogenase family. Type 2 subfamily. Monomer.

It carries out the reaction 1-haloalkane + H2O = a halide anion + a primary alcohol + H(+). Catalyzes hydrolytic cleavage of carbon-halogen bonds in halogenated aliphatic compounds, leading to the formation of the corresponding primary alcohols, halide ions and protons. The polypeptide is Haloalkane dehalogenase (Mycobacterium tuberculosis (strain ATCC 25177 / H37Ra)).